Reading from the N-terminus, the 349-residue chain is Protein-glutamate methylesterase/protein-glutamine glutaminase 1 (349 aa).

Residues 4–119 enclose the Response regulatory domain; sequence RILVVDDSAV…KGFLEDSARR (116 aa). A 4-aspartylphosphate modification is found at aspartate 53. Positions 159-349 constitute a CheB-type methylesterase domain; sequence PRAGRAELVV…VASAVLAWAR (191 aa). Active-site residues include serine 172, histidine 198, and aspartate 293.

The protein belongs to the CheB family. Post-translationally, phosphorylated by CheA. Phosphorylation of the N-terminal regulatory domain activates the methylesterase activity.

It is found in the cytoplasm. It catalyses the reaction [protein]-L-glutamate 5-O-methyl ester + H2O = L-glutamyl-[protein] + methanol + H(+). The catalysed reaction is L-glutaminyl-[protein] + H2O = L-glutamyl-[protein] + NH4(+). In terms of biological role, involved in chemotaxis. Part of a chemotaxis signal transduction system that modulates chemotaxis in response to various stimuli. Catalyzes the demethylation of specific methylglutamate residues introduced into the chemoreceptors (methyl-accepting chemotaxis proteins or MCP) by CheR. Also mediates the irreversible deamidation of specific glutamine residues to glutamic acid. The sequence is that of Protein-glutamate methylesterase/protein-glutamine glutaminase 1 from Anaeromyxobacter dehalogenans (strain 2CP-C).